Reading from the N-terminus, the 328-residue chain is Formimidoylglutamase (328 aa).

Mn(2+) contacts are provided by His133, Asp159, His161, Asp163, Asp253, and Asp255.

It belongs to the arginase family. Requires Mn(2+) as cofactor.

It catalyses the reaction N-formimidoyl-L-glutamate + H2O = formamide + L-glutamate. Its pathway is amino-acid degradation; L-histidine degradation into L-glutamate; L-glutamate from N-formimidoyl-L-glutamate (hydrolase route): step 1/1. Catalyzes the conversion of N-formimidoyl-L-glutamate to L-glutamate and formamide. This Streptococcus pyogenes serotype M6 (strain ATCC BAA-946 / MGAS10394) protein is Formimidoylglutamase.